The chain runs to 298 residues: Aspartate carbamoyltransferase catalytic subunit (298 aa).

Arg50 and Thr51 together coordinate carbamoyl phosphate. Lys79 serves as a coordination point for L-aspartate. Residues Arg100, His128, and Gln131 each coordinate carbamoyl phosphate. L-aspartate contacts are provided by Arg160 and Arg221. Residues Leu260 and Pro261 each contribute to the carbamoyl phosphate site.

This sequence belongs to the aspartate/ornithine carbamoyltransferase superfamily. ATCase family. As to quaternary structure, heterooligomer of catalytic and regulatory chains.

It carries out the reaction carbamoyl phosphate + L-aspartate = N-carbamoyl-L-aspartate + phosphate + H(+). Its pathway is pyrimidine metabolism; UMP biosynthesis via de novo pathway; (S)-dihydroorotate from bicarbonate: step 2/3. Catalyzes the condensation of carbamoyl phosphate and aspartate to form carbamoyl aspartate and inorganic phosphate, the committed step in the de novo pyrimidine nucleotide biosynthesis pathway. This chain is Aspartate carbamoyltransferase catalytic subunit, found in Methanoculleus marisnigri (strain ATCC 35101 / DSM 1498 / JR1).